The following is a 60-amino-acid chain: Large ribosomal subunit protein uL30 (60 aa).

Belongs to the universal ribosomal protein uL30 family. In terms of assembly, part of the 50S ribosomal subunit.

In Ligilactobacillus salivarius (strain UCC118) (Lactobacillus salivarius), this protein is Large ribosomal subunit protein uL30.